The chain runs to 423 residues: Imidazolonepropionase (423 aa).

H78 and H80 together coordinate Fe(3+). Residues H78 and H80 each coordinate Zn(2+). 4-imidazolone-5-propanoate-binding residues include R87, Y150, and H183. Y150 provides a ligand contact to N-formimidoyl-L-glutamate. H247 is a Fe(3+) binding site. H247 is a binding site for Zn(2+). E250 contributes to the 4-imidazolone-5-propanoate binding site. Position 322 (D322) interacts with Fe(3+). D322 is a binding site for Zn(2+). Residues N324 and G326 each coordinate N-formimidoyl-L-glutamate. 4-imidazolone-5-propanoate is bound at residue S327.

It belongs to the metallo-dependent hydrolases superfamily. HutI family. It depends on Zn(2+) as a cofactor. Requires Fe(3+) as cofactor.

Its subcellular location is the cytoplasm. The enzyme catalyses 4-imidazolone-5-propanoate + H2O = N-formimidoyl-L-glutamate. It participates in amino-acid degradation; L-histidine degradation into L-glutamate; N-formimidoyl-L-glutamate from L-histidine: step 3/3. Its function is as follows. Catalyzes the hydrolytic cleavage of the carbon-nitrogen bond in imidazolone-5-propanoate to yield N-formimidoyl-L-glutamate. It is the third step in the universal histidine degradation pathway. The sequence is that of Imidazolonepropionase from Bacillus cereus (strain ATCC 14579 / DSM 31 / CCUG 7414 / JCM 2152 / NBRC 15305 / NCIMB 9373 / NCTC 2599 / NRRL B-3711).